Here is a 349-residue protein sequence, read N- to C-terminus: Tribbles homolog 3 (349 aa).

The interval 1-122 (MRATSLAASA…QHVARPTEVL (122 aa)) is interaction with DDIT3/CHOP. Residues 35–57 (VRDEPEPGPTPSLPPASDLSPAV) are disordered. Positions 63–310 (LGPYILLERE…ALGILLHPWL (248 aa)) constitute a Protein kinase domain. A disordered region spans residues 317–349 (VSPPRSDRREMDQVVPDGPQLEEAEEGEVGLYG). Residues 336-349 (QLEEAEEGEVGLYG) are compositionally biased toward acidic residues.

The protein belongs to the protein kinase superfamily. CAMK Ser/Thr protein kinase family. Tribbles subfamily. As to quaternary structure, interacts with AKT1, AKT2, MAP2K1 and MAP2K7. Interacts with ATF4. Interacts with DDIT3/CHOP and inhibits its interaction with EP300/P300. Interacts with APOBEC3C. Interacts (via N-terminus) with APOBEC3A. Interacts with RELA. In terms of tissue distribution, detected only in the lung. Not detected in the heart, brain, spleen, liver, skeletal muscle, kidney and testis.

It localises to the nucleus. Its function is as follows. Inactive protein kinase which acts as a regulator of the integrated stress response (ISR), a process for adaptation to various stress. Inhibits the transcriptional activity of DDIT3/CHOP and is involved in DDIT3/CHOP-dependent cell death during ER stress. May play a role in programmed neuronal cell death but does not appear to affect non-neuronal cells. Acts as a negative feedback regulator of the ATF4-dependent transcription during the ISR: while TRIB3 expression is promoted by ATF4, TRIB3 protein interacts with ATF4 and inhibits ATF4 transcription activity. Disrupts insulin signaling by binding directly to Akt kinases and blocking their activation. May bind directly to and mask the 'Thr-308' phosphorylation site in AKT1. Interacts with the NF-kappa-B transactivator p65 RELA and inhibits its phosphorylation and thus its transcriptional activation activity. Interacts with MAPK kinases and regulates activation of MAP kinases. Can inhibit APOBEC3A editing of nuclear DNA. This chain is Tribbles homolog 3 (Trib3), found in Rattus norvegicus (Rat).